The following is a 432-amino-acid chain: Asparagine--tRNA ligase (432 aa).

Belongs to the class-II aminoacyl-tRNA synthetase family. As to quaternary structure, homodimer.

It localises to the cytoplasm. The enzyme catalyses tRNA(Asn) + L-asparagine + ATP = L-asparaginyl-tRNA(Asn) + AMP + diphosphate + H(+). The polypeptide is Asparagine--tRNA ligase (Lacticaseibacillus paracasei (strain ATCC 334 / BCRC 17002 / CCUG 31169 / CIP 107868 / KCTC 3260 / NRRL B-441) (Lactobacillus paracasei)).